The following is a 304-amino-acid chain: MATH domain and coiled-coil domain-containing protein At2g42470 (304 aa).

Positions 6–123 (QTSFTFEIDN…NNKLIIEVQV (118 aa)) constitute an MATH domain. Positions 219-292 (FKVDWLKKKL…LKIELDRTRR (74 aa)) form a coiled coil.

This chain is MATH domain and coiled-coil domain-containing protein At2g42470, found in Arabidopsis thaliana (Mouse-ear cress).